The following is a 364-amino-acid chain: Spermidine/putrescine import ATP-binding protein PotA (364 aa).

The 231-residue stretch at 6–236 (IEIRQIYKSY…PANLHVAMFI (231 aa)) folds into the ABC transporter domain. Position 38-45 (38-45 (GPSGCGKT)) interacts with ATP.

Belongs to the ABC transporter superfamily. Spermidine/putrescine importer (TC 3.A.1.11.1) family. In terms of assembly, the complex is composed of two ATP-binding proteins (PotA), two transmembrane proteins (PotB and PotC) and a solute-binding protein (PotD).

Its subcellular location is the cell inner membrane. The enzyme catalyses ATP + H2O + polyamine-[polyamine-binding protein]Side 1 = ADP + phosphate + polyamineSide 2 + [polyamine-binding protein]Side 1.. Its function is as follows. Part of the ABC transporter complex PotABCD involved in spermidine/putrescine import. Responsible for energy coupling to the transport system. This is Spermidine/putrescine import ATP-binding protein PotA from Legionella pneumophila (strain Lens).